Reading from the N-terminus, the 382-residue chain is Homeobox protein bagpipe (382 aa).

3 disordered regions span residues asparagine 27 to proline 66, threonine 144 to serine 178, and glutamine 314 to aspartate 382. Positions glutamate 48 to isoleucine 62 are enriched in basic and acidic residues. Residues serine 158–serine 170 are compositionally biased toward low complexity. The homeobox DNA-binding region spans lysine 175–glutamine 234. Over residues glutamine 321–proline 335 the composition is skewed to low complexity. The segment covering glutamate 373–aspartate 382 has biased composition (acidic residues).

The protein belongs to the NK-3 homeobox family. Is expressed in a segmented pattern in visceral muscle and in a subset of cardiac muscles. Loss of activity results in segmental gaps in midgut visceral muscle.

Its subcellular location is the nucleus. Involved in the determination of cell fates in the dorsal mesoderm. This chain is Homeobox protein bagpipe (bap), found in Drosophila melanogaster (Fruit fly).